An 834-amino-acid chain; its full sequence is Serine-rich coiled-coil domain-containing protein 2 (834 aa).

The interval 169-212 (PKSQLNGFYGNRSAGSMQRPRANSCATRSSSGESLAQSPDSSKS) is disordered. Over residues 192–212 (SCATRSSSGESLAQSPDSSKS) the composition is skewed to polar residues. Ser223 bears the Phosphoserine mark. The segment covering 426–443 (RTRITPEEMSLKEEKHEN) has biased composition (basic and acidic residues). Disordered regions lie at residues 426-454 (RTRITPEEMSLKEEKHENGPPQDMFDSPK), 477-509 (CTKHTSGNNLVSPDTDYRAGSSFELSPSDSSDG), 573-628 (NMNR…SPYR), 695-714 (LHDIQLSLPSSPEPEDGDKV), and 780-834 (APSF…RGPQ). Ser452 bears the Phosphoserine mark. The span at 497–507 (SSFELSPSDSS) shows a compositional bias: low complexity. Basic and acidic residues-rich tracts occupy residues 573–584 (NMNRFDRPDRNV) and 601–611 (GQEHYHLSHPD). The stretch at 712–749 (DKVYKNEDLLNEIKQLKDEIKKKDEKIQLLELQLATQH) forms a coiled coil. 2 stretches are compositionally biased toward polar residues: residues 781–790 (PSFSPWQGSF) and 804–816 (TSSTTAFQQPSQT).

Belongs to the CCSER family.

It localises to the cytoplasm. It is found in the cytoskeleton. In terms of biological role, microtubule-binding protein which might play a role in microtubule bundling. This is Serine-rich coiled-coil domain-containing protein 2 (CCSER2) from Homo sapiens (Human).